The chain runs to 102 residues: Large ribosomal subunit protein bL21 (102 aa).

The protein belongs to the bacterial ribosomal protein bL21 family. As to quaternary structure, part of the 50S ribosomal subunit. Contacts protein L20.

Functionally, this protein binds to 23S rRNA in the presence of protein L20. The polypeptide is Large ribosomal subunit protein bL21 (Bacillus cytotoxicus (strain DSM 22905 / CIP 110041 / 391-98 / NVH 391-98)).